A 310-amino-acid chain; its full sequence is 4-hydroxyproline epimerase (310 aa).

Cys-88 serves as the catalytic Proton acceptor. Substrate contacts are provided by residues 89-90 (GH), His-208, and Asp-232. Cys-236 (proton donor) is an active-site residue. Position 237-238 (237-238 (GT)) interacts with substrate.

The protein belongs to the proline racemase family. As to quaternary structure, homodimer.

The enzyme catalyses trans-4-hydroxy-L-proline = cis-4-hydroxy-D-proline. Allows intracellular utilization of 4-hydroxyproline, one of the major constituents of host collagen, by converting 4-hydroxy-L-proline to 4-hydroxy-D-proline, which can be further metabolized by intracellular 4-hydroxy-D-proline oxidases. The chain is 4-hydroxyproline epimerase from Burkholderia cenocepacia (strain HI2424).